Reading from the N-terminus, the 672-residue chain is UvrABC system protein B (672 aa).

The Helicase ATP-binding domain maps to 26-181 (AGLEDGLAYQ…ILQRLAELQY (156 aa)). 39–46 (GVTGSGKT) contributes to the ATP binding site. Residues 92–115 (YYDYYQPEAYVPSSDTYIEKDASI) carry the Beta-hairpin motif. The 163-residue stretch at 430–592 (QVDDLLSEIK…ITPKSIQKAV (163 aa)) folds into the Helicase C-terminal domain. The region spanning 631–666 (AKELRKLEEQMYHHARNLEFEEAAAVRDKIQHIRKG) is the UVR domain.

This sequence belongs to the UvrB family. Forms a heterotetramer with UvrA during the search for lesions. Interacts with UvrC in an incision complex.

It localises to the cytoplasm. In terms of biological role, the UvrABC repair system catalyzes the recognition and processing of DNA lesions. A damage recognition complex composed of 2 UvrA and 2 UvrB subunits scans DNA for abnormalities. Upon binding of the UvrA(2)B(2) complex to a putative damaged site, the DNA wraps around one UvrB monomer. DNA wrap is dependent on ATP binding by UvrB and probably causes local melting of the DNA helix, facilitating insertion of UvrB beta-hairpin between the DNA strands. Then UvrB probes one DNA strand for the presence of a lesion. If a lesion is found the UvrA subunits dissociate and the UvrB-DNA preincision complex is formed. This complex is subsequently bound by UvrC and the second UvrB is released. If no lesion is found, the DNA wraps around the other UvrB subunit that will check the other stand for damage. The sequence is that of UvrABC system protein B from Coxiella burnetii (strain Dugway 5J108-111).